The following is a 25-amino-acid chain: Aurein-5.1 (25 aa).

The protein belongs to the frog skin active peptide (FSAP) family. Aurein subfamily. Expressed by the skin dorsal glands.

It localises to the secreted. In terms of biological role, has no antimicrobial or anticancer activity. The sequence is that of Aurein-5.1 from Ranoidea aurea (Green and golden bell frog).